Consider the following 128-residue polypeptide: Glycophorin-C (128 aa).

A compositionally biased stretch (polar residues) spans 1–12 (MWSTRSPNSTAW). Residues 1–48 (MWSTRSPNSTAWPLSLEPDPGMASASTTMHTTTIAEPDPGMSGWPDGR) are disordered. Residues 1-57 (MWSTRSPNSTAWPLSLEPDPGMASASTTMHTTTIAEPDPGMSGWPDGRMETSTPTIM) are Extracellular-facing. A glycan (O-linked (GalNAc...) serine) is linked at serine 3. Threonine 4 carries an O-linked (GalNAc...) threonine glycan. Residue serine 6 is glycosylated (O-linked (GalNAc...) serine). Asparagine 8 carries an N-linked (GlcNAc...) asparagine glycan. An O-linked (GalNAc...) serine glycan is attached at serine 9. O-linked (GalNAc...) threonine glycosylation occurs at threonine 10. 3 O-linked (GalNAc...) serine glycosylation sites follow: serine 15, serine 24, and serine 26. A compositionally biased stretch (low complexity) spans 22-33 (MASASTTMHTTT). Threonine 27, threonine 28, threonine 31, threonine 32, and threonine 33 each carry an O-linked (GalNAc...) threonine glycan. O-linked (GalNAc...) serine glycosylation is present at serine 42. The chain crosses the membrane as a helical; Signal-anchor for type III membrane protein span at residues 58–81 (DIVVIAGVIAAVAIVLVSLLFVML). Residues 82-128 (RYMYRHKGTYHTNEAKGTEFAESADAALQGDPALQDAGDSSRKEYFI) lie on the Cytoplasmic side of the membrane. 2 positions are modified to phosphoserine: serine 104 and serine 122. Residues 108–128 (ALQGDPALQDAGDSSRKEYFI) are disordered.

Belongs to the glycophorin-C family. Post-translationally, O-glycosylated with core 1 or possibly core 8 glycans. In terms of tissue distribution, glycophorin-C is expressed in erythrocytes. Glycophorin-D and IsoGPC are ubiquitously expressed.

The protein localises to the cell membrane. This protein is a minor sialoglycoprotein in human erythrocyte membranes. The blood group Gerbich antigens and receptors for Plasmodium falciparum merozoites are most likely located within the extracellular domain. Glycophorin-C plays an important role in regulating the stability of red cells. This chain is Glycophorin-C (GYPC), found in Homo sapiens (Human).